The primary structure comprises 143 residues: Transcriptional regulator MraZ (143 aa).

2 consecutive SpoVT-AbrB domains span residues 5–47 (EYQH…PMSE) and 76–119 (ATEC…SKEI).

The protein belongs to the MraZ family. Forms oligomers.

The protein resides in the cytoplasm. Its subcellular location is the nucleoid. This Bacillus licheniformis (strain ATCC 14580 / DSM 13 / JCM 2505 / CCUG 7422 / NBRC 12200 / NCIMB 9375 / NCTC 10341 / NRRL NRS-1264 / Gibson 46) protein is Transcriptional regulator MraZ.